We begin with the raw amino-acid sequence, 449 residues long: Exopolygalacturonase X-2 (449 aa).

The N-terminal stretch at 1–24 (MGFKRTIGLLLGILLALDQVSVLA) is a signal peptide. 3 N-linked (GlcNAc...) asparagine glycosylation sites follow: Asn-136, Asn-172, and Asn-208. The stretch at 240 to 261 (SDNVVIQNSVINHDDDCVSFKP) is one PbH1 1 repeat. The active-site Proton donor is the Asp-254. Cys-256 and Cys-273 are oxidised to a cystine. N-linked (GlcNAc...) asparagine glycosylation is found at Asn-262 and Asn-274. PbH1 repeat units lie at residues 263 to 283 (STNI…SVGS) and 294 to 315 (VSDL…RLKV). The active site involves His-277. N-linked (GlcNAc...) asparagine glycosylation is found at Asn-301, Asn-306, Asn-340, and Asn-365. Cys-403 and Cys-409 are oxidised to a cystine. Asn-416 and Asn-421 each carry an N-linked (GlcNAc...) asparagine glycan.

It belongs to the glycosyl hydrolase 28 family.

The protein resides in the secreted. The catalysed reaction is [(1-&gt;4)-alpha-D-galacturonosyl](n) + H2O = alpha-D-galacturonate + [(1-&gt;4)-alpha-D-galacturonosyl](n-1). Its function is as follows. Specific in hydrolyzing the terminal glycosidic bond of polygalacturonic acid and oligogalacturonates. The chain is Exopolygalacturonase X-2 (pgaX-2) from Emericella nidulans (strain FGSC A4 / ATCC 38163 / CBS 112.46 / NRRL 194 / M139) (Aspergillus nidulans).